Consider the following 690-residue polypeptide: UvrABC system protein B (690 aa).

The 384-residue stretch at 39 to 422 (EGLDDGLSFQ…EQQHAGQVVE (384 aa)) folds into the Helicase ATP-binding domain. 52-59 (GVTGSGKT) serves as a coordination point for ATP. Positions 105–128 (YYDYYQPEAYVPSRDLFIEKDSSI) match the Beta-hairpin motif. Positions 443–596 (QVDDLLAEIG…QIAFNLEHGI (154 aa)) constitute a Helicase C-terminal domain. Residues 640 to 675 (AREIKRLEKSMMECAKNLEFEKAAAARDDLFRLRER) form the UVR domain.

This sequence belongs to the UvrB family. In terms of assembly, forms a heterotetramer with UvrA during the search for lesions. Interacts with UvrC in an incision complex.

The protein localises to the cytoplasm. Its function is as follows. The UvrABC repair system catalyzes the recognition and processing of DNA lesions. A damage recognition complex composed of 2 UvrA and 2 UvrB subunits scans DNA for abnormalities. Upon binding of the UvrA(2)B(2) complex to a putative damaged site, the DNA wraps around one UvrB monomer. DNA wrap is dependent on ATP binding by UvrB and probably causes local melting of the DNA helix, facilitating insertion of UvrB beta-hairpin between the DNA strands. Then UvrB probes one DNA strand for the presence of a lesion. If a lesion is found the UvrA subunits dissociate and the UvrB-DNA preincision complex is formed. This complex is subsequently bound by UvrC and the second UvrB is released. If no lesion is found, the DNA wraps around the other UvrB subunit that will check the other stand for damage. The chain is UvrABC system protein B from Dechloromonas aromatica (strain RCB).